The primary structure comprises 129 residues: Protein RfbJ (129 aa).

Belongs to the glycosyltransferase 2 family.

The protein operates within bacterial outer membrane biogenesis; lipopolysaccharide biosynthesis. This chain is Protein RfbJ (rfbJ), found in Shigella flexneri.